The primary structure comprises 807 residues: Shutoff protein (807 aa).

Residues 1–88 (MESVEKKDSL…QVGRGDERHG (88 aa)) form a disordered region. Residues 16–29 (FATTASTDAANAPT) show a composition bias toward polar residues. Composition is skewed to basic and acidic residues over residues 59-70 (RSVPTEDKKQDQ) and 79-88 (QVGRGDERHG). Residues 280–345 (VMSELIVRRA…AVLVTVELEC (66 aa)) form a binding to host EIF4G region. In terms of domain architecture, RRM spans 348–466 (RFFADPEMQR…DLWTAFNERS (119 aa)). Phosphotyrosine; by host is present on residues Tyr365 and Tyr682. The disordered stretch occupies residues 684 to 807 (DPQSGEELNP…AGTARSPTQP (124 aa)). A compositionally biased stretch (gly residues) spans 726 to 743 (GRGGILGQSGRGGFGRGG). Over residues 744 to 755 (GGHDGRLGEPRR) the composition is skewed to basic and acidic residues. The segment covering 756–765 (GSFRGRRGVR) has biased composition (basic residues).

Belongs to the adenoviridae shutoff protein family. Monomer. Interacts with hexon protein; this interaction allows chaperoning and trimerization of hexon proteins. Interacts (via N-terminus) with host initiation factor EIF4G (via C-terminus). Interacts (via RRM domain) with viral mRNAs that contain the tripartite leader; this interaction allows ribosome shunting and expression of viral late mRNAs. Post-translationally, might be cleaved by the viral protease. In terms of processing, phosphorylated. Tyrosine phosphorylation enhances preferential binding to tripartite leader mRNAs and allows ribosome shunting. Methylated. Asymmetric dimethylation by host PRMT1 of the Arg/Gly-rich region may regulate shutoff protein binding to hexon and promote the capsid assembly in the nucleus.

It localises to the host cytoplasm. Its function is as follows. Protein that inhibits host translation while promoting late viral translation by ribosome shunting. Blocks host cap-dependent translation by binding to eIF4G, displacing MKNK1 from cap initiation complexes and preventing EIF4E phosphorylation. Binds to the tripartite leader sequence of viral late mRNAs and recruits host eIF4G, PABPC1/poly-A binding protein and 40S ribosomes subunits on viral mRNAs, allowing ribosome shunting and efficient translation of late viral mRNAs even though conventional translation via ribosome scanning from the cap has been shut off in the host cell. During assembly, acts as a chaperone protein that helps hexon proteins assembly into trimers. The protein is Shutoff protein of Homo sapiens (Human).